Consider the following 227-residue polypeptide: GFP-like non-fluorescent chromoprotein (227 aa).

Positions 63-65 (EYG) form a cross-link, 2-iminomethyl-5-imidazolinone (Glu-Gly). Tyr64 bears the 2,3-didehydrotyrosine mark.

This sequence belongs to the GFP family. As to quaternary structure, homotetramer. In terms of processing, contains a chromophore consisting of modified amino acid residues. The chromophore is formed by autocatalytic backbone condensation between Xaa-N and Gly-(N+2), oxidation of Tyr-(N+1) to didehydrotyrosine, and formation of a double bond to the alpha-amino nitrogen of residue Xaa-N. Maturation of the chromophore requires nothing other than molecular oxygen. The precise stereochemistry of the tyrosine has not been determined.

In terms of biological role, non-fluorescent pigment protein that is lilac in color. This is GFP-like non-fluorescent chromoprotein from Radianthus crispa (Leathery sea anemone).